Consider the following 56-residue polypeptide: Endoregulin (56 aa).

The helical transmembrane segment at 25 to 45 (LTVIGLFTSTFLLFVLFAVVF) threads the bilayer.

Homooligomer. Can also form heterooligomers with other sarcoplasmic/endoplasmic reticulum calcium ATPase (SERCA) regulators ARLN, PLN, SLN and STRIT1/DWORF. Monomer. Interacts as a monomer with ATP2A2/SERCA2; the interaction results in inhibition of ATP2A2 Ca(2+) affinity. Largely expressed in non-muscle tissues with the exception of weak expression in body wall muscles at 14.5 dpc. Expressed in epithelial cells of the trachea, bronchus, lung, intestine, pancreas, and liver.

It is found in the endoplasmic reticulum membrane. Its function is as follows. Inhibits the activity of the calcium ATPases ATP2A2/SERCA2 and ATP2A3/SERCA3 by decreasing their apparent affinity for Ca(2+). In Mus musculus (Mouse), this protein is Endoregulin (Erln).